Here is a 317-residue protein sequence, read N- to C-terminus: Beta-ketoacyl-[acyl-carrier-protein] synthase III (317 aa).

Residues Cys-112 and His-244 contribute to the active site. Positions 245 to 249 (QANLR) are ACP-binding. Asn-274 is an active-site residue.

This sequence belongs to the thiolase-like superfamily. FabH family. As to quaternary structure, homodimer.

It is found in the cytoplasm. It catalyses the reaction malonyl-[ACP] + acetyl-CoA + H(+) = 3-oxobutanoyl-[ACP] + CO2 + CoA. The protein operates within lipid metabolism; fatty acid biosynthesis. In terms of biological role, catalyzes the condensation reaction of fatty acid synthesis by the addition to an acyl acceptor of two carbons from malonyl-ACP. Catalyzes the first condensation reaction which initiates fatty acid synthesis and may therefore play a role in governing the total rate of fatty acid production. Possesses both acetoacetyl-ACP synthase and acetyl transacylase activities. Its substrate specificity determines the biosynthesis of branched-chain and/or straight-chain of fatty acids. The chain is Beta-ketoacyl-[acyl-carrier-protein] synthase III from Salmonella arizonae (strain ATCC BAA-731 / CDC346-86 / RSK2980).